Consider the following 438-residue polypeptide: Arginine deiminase-like protein (438 aa).

It belongs to the arginine deiminase family.

The sequence is that of Arginine deiminase-like protein from Mycoplasma pneumoniae (strain ATCC 29342 / M129 / Subtype 1) (Mycoplasmoides pneumoniae).